The sequence spans 305 residues: Lipoyl synthase (305 aa).

7 residues coordinate [4Fe-4S] cluster: C41, C46, C52, C68, C72, C75, and S281. The Radical SAM core domain maps to 54–270; sequence GARRTATFMI…RKVAMDKGFK (217 aa). Over residues 283-298 the composition is skewed to basic and acidic residues; that stretch reads HADEQVNEAAKEKQRQ. The tract at residues 283–305 is disordered; the sequence is HADEQVNEAAKEKQRQGEAQLNS.

It belongs to the radical SAM superfamily. Lipoyl synthase family. The cofactor is [4Fe-4S] cluster.

The protein resides in the cytoplasm. The enzyme catalyses [[Fe-S] cluster scaffold protein carrying a second [4Fe-4S](2+) cluster] + N(6)-octanoyl-L-lysyl-[protein] + 2 oxidized [2Fe-2S]-[ferredoxin] + 2 S-adenosyl-L-methionine + 4 H(+) = [[Fe-S] cluster scaffold protein] + N(6)-[(R)-dihydrolipoyl]-L-lysyl-[protein] + 4 Fe(3+) + 2 hydrogen sulfide + 2 5'-deoxyadenosine + 2 L-methionine + 2 reduced [2Fe-2S]-[ferredoxin]. It participates in protein modification; protein lipoylation via endogenous pathway; protein N(6)-(lipoyl)lysine from octanoyl-[acyl-carrier-protein]. Functionally, catalyzes the radical-mediated insertion of two sulfur atoms into the C-6 and C-8 positions of the octanoyl moiety bound to the lipoyl domains of lipoate-dependent enzymes, thereby converting the octanoylated domains into lipoylated derivatives. This is Lipoyl synthase from Staphylococcus aureus (strain bovine RF122 / ET3-1).